The following is a 368-amino-acid chain: Probable magnesium transporter NIPA3 (368 aa).

The Extracellular portion of the chain corresponds to 1–18; sequence MASLSGSWRDAYKGMSSD. Residues 19 to 39 form a helical membrane-spanning segment; it reads NIKGLVLALSSSLFIGASFIV. The Cytoplasmic segment spans residues 40–66; it reads KKKGLKRAGASGLRAGSGGYSYLLEPL. Residues 67–87 traverse the membrane as a helical segment; that stretch reads WWVGMITMIVGEIANFAAYAF. At 88–90 the chain is on the extracellular side; sequence APA. Residues 91–111 form a helical membrane-spanning segment; that stretch reads ILVTPLGALSIIISAALAHVI. At 112–115 the chain is on the cytoplasmic side; the sequence is LHEK. Residues 116-136 form a helical membrane-spanning segment; sequence LHTFGLLGCVLCVVGSITIVL. Over 137–157 the chain is Extracellular; that stretch reads HAPQEQEIDSVLQVWNLATEP. A helical transmembrane segment spans residues 158 to 178; sequence AFLLYAAAVVGAAIILIVQFV. Residues 179-189 are Cytoplasmic-facing; the sequence is PQYGQSHVMVY. A helical membrane pass occupies residues 190-210; that stretch reads IGVCSLVGSLSVMSVKALGIA. The Extracellular segment spans residues 211–220; the sequence is LKLTFSGMNQ. A helical transmembrane segment spans residues 221–241; sequence LIYPQTWVFTLIVLTCVITQM. The Cytoplasmic portion of the chain corresponds to 242–255; that stretch reads NYLNKALDTFNTAV. Residues 256-276 form a helical membrane-spanning segment; that stretch reads VSPIYYVMFTSLTILASVIMF. Topologically, residues 277–283 are extracellular; it reads KDWDRQD. A helical membrane pass occupies residues 284–304; the sequence is GTQIVTELCGFVTILSGTFLL. Over 305-368 the chain is Cytoplasmic; it reads HKTKDMVDGS…ILPQDGPEAV (64 aa).

Belongs to the NIPA (TC 2.A.7) family. In terms of assembly, homodimer.

Its subcellular location is the cell membrane. It localises to the early endosome. Functionally, acts as a Mg(2+) transporter. Can also transport other divalent cations such as Fe(2+), Sr(2+), Ba(2+), Mn(2+) and Co(2+) but to a much less extent than Mg(2+). The protein is Probable magnesium transporter NIPA3 of Arabidopsis thaliana (Mouse-ear cress).